Here is a 94-residue protein sequence, read N- to C-terminus: Integration host factor subunit beta (94 aa).

The protein belongs to the bacterial histone-like protein family. As to quaternary structure, heterodimer of an alpha and a beta chain.

Functionally, this protein is one of the two subunits of integration host factor, a specific DNA-binding protein that functions in genetic recombination as well as in transcriptional and translational control. In Yersinia pseudotuberculosis serotype O:1b (strain IP 31758), this protein is Integration host factor subunit beta.